Reading from the N-terminus, the 840-residue chain is MEADPAPSSTPPPSSPAPAASPSRHPPGEEGGGAERVEVEEYVDPPSPDCCGGADPDHAPPPSPKGEEPVVSAEEEQAAVAGGEGEALRSFLEEFGDQGDDSLVPSPKLKQINTPDRLAALRFLGGKYNSLLERYKQQVAKCAEECAPRYDGLKKKYADECAERRRLYNELIELRGNIRVFCRCRPLSTAEISNGCSSIVQIDPSHETELQFVPSDKDRKAFKFDHVFGPSDNQETVFAESLPVVRSVMDGFNVCIFAYGQTGTGKTFTMEGIPEDRGVNYRALEELFRLSEERSSSVAYTFAVSILEVYNEKIRDLLDESSEQTGRKLDIKQTADGTQEVAGLIEAPIYTIDGVWEKLKVGAKNRSVGATSANELSSRSHSLVKVTVRSEHLVTGQKWRSHIWLVDLAGSERVNKTEVEGDRLKESQFINKSLSALGDVISALASKNAHIPYRNSKLTHLLQSSLGGDCKTLMFVQISPSSADSGETLCSLNFASRVRAIDHGPARKQADPAETFKLKQMTEKIRHEEKENAKLLESLQLTQLKYASRENVIKTLQEKIREAEQTSKTYQQRVRELENELANEKKAARDTARSTKPPLAPMRQRPPLGRIGNHIPPKAPLRLRLSKAPTIQNKENIPVMLNKGSSGADTSKAVAGKARRVSLTPVIRHIPLQPKRRSSLAVLPTQREQLSIFPDKRSVSRLSHIQMPRRSIATFNSIPATPLAAAAHKQVDGTPEARQLRRIEFSSSKFRSPPALARFNSRNNALSPQQKLRLASGSGNASKICFSVQKRVILGSPAPVKSSLLSGTGIFNPALREKMMAAKIGNAQRVFNTNRRKSVL.

The tract at residues 1-74 (MEADPAPSST…KGEEPVVSAE (74 aa)) is disordered. One can recognise a Kinesin motor domain in the interval 177 to 501 (NIRVFCRCRP…LNFASRVRAI (325 aa)). 260–267 (GQTGTGKT) lines the ATP pocket. Residues 517–594 (KLKQMTEKIR…KKAARDTARS (78 aa)) adopt a coiled-coil conformation. The span at 581-593 (LANEKKAARDTAR) shows a compositional bias: basic and acidic residues. Residues 581-617 (LANEKKAARDTARSTKPPLAPMRQRPPLGRIGNHIPP) form a disordered region.

Belongs to the TRAFAC class myosin-kinesin ATPase superfamily. Kinesin family. KIN-14 subfamily.

This is Kinesin-like protein KIN-14J from Oryza sativa subsp. japonica (Rice).